Here is a 160-residue protein sequence, read N- to C-terminus: Allophycocyanin alpha chain (160 aa).

At Asn-70 the chain carries N4-methylasparagine. Cys-80 contributes to the (2R,3E)-phycocyanobilin binding site.

Belongs to the phycobiliprotein family. As to quaternary structure, component of the phycobilisome. Heterodimer of an alpha and a beta chain. In terms of processing, contains one covalently linked phycocyanobilin chromophore.

The protein resides in the cellular thylakoid membrane. Its function is as follows. Light-harvesting photosynthetic bile pigment-protein from the phycobiliprotein complex. Allophycocyanin has a maximum absorption at approximately 650 nanometers. The protein is Allophycocyanin alpha chain (apcA) of Anabaena cylindrica.